Reading from the N-terminus, the 201-residue chain is Holliday junction branch migration complex subunit RuvA (201 aa).

The interval 1–63 is domain I; that stretch reads MYDYIKGTVT…EDNISLFGFQ (63 aa). The tract at residues 64–142 is domain II; it reads TTEERYLFKK…DVVASEIVYV (79 aa). Residues 143–153 are flexible linker; it reads APENDMVAGLS. Residues 153 to 201 are domain III; that stretch reads SPQLEEAVLALEALGYSTRELKKVIPKLAKEADLTSDAYIKLALQLMTK.

It belongs to the RuvA family. In terms of assembly, homotetramer. Forms an RuvA(8)-RuvB(12)-Holliday junction (HJ) complex. HJ DNA is sandwiched between 2 RuvA tetramers; dsDNA enters through RuvA and exits via RuvB. An RuvB hexamer assembles on each DNA strand where it exits the tetramer. Each RuvB hexamer is contacted by two RuvA subunits (via domain III) on 2 adjacent RuvB subunits; this complex drives branch migration. In the full resolvosome a probable DNA-RuvA(4)-RuvB(12)-RuvC(2) complex forms which resolves the HJ.

The protein localises to the cytoplasm. Its function is as follows. The RuvA-RuvB-RuvC complex processes Holliday junction (HJ) DNA during genetic recombination and DNA repair, while the RuvA-RuvB complex plays an important role in the rescue of blocked DNA replication forks via replication fork reversal (RFR). RuvA specifically binds to HJ cruciform DNA, conferring on it an open structure. The RuvB hexamer acts as an ATP-dependent pump, pulling dsDNA into and through the RuvAB complex. HJ branch migration allows RuvC to scan DNA until it finds its consensus sequence, where it cleaves and resolves the cruciform DNA. This is Holliday junction branch migration complex subunit RuvA from Listeria monocytogenes serovar 1/2a (strain ATCC BAA-679 / EGD-e).